Here is a 541-residue protein sequence, read N- to C-terminus: DEAD-box ATP-dependent RNA helicase 57 (541 aa).

Positions 43–52 (VEEEEDTEQP) are enriched in acidic residues. Residues 43-72 (VEEEEDTEQPEAEKVIVSSKKRKRRSSNSV) form a disordered region. The Q motif motif lies at 141-169 (ELSSRYGCEGYILRNLAELGFKEPTPIQR). In terms of domain architecture, Helicase ATP-binding spans 172–342 (IPILLSGREC…RSIMHDAVRV (171 aa)). 185-192 (APTGSGKT) provides a ligand contact to ATP. The DEAD box motif lies at 289 to 292 (DESD). Residues 370 to 514 (ALRQSFAESL…EVPSWIMSLK (145 aa)) form the Helicase C-terminal domain. Residues 517-541 (KWRKHRPRRDSISTKPKADKNDTDE) form a disordered region. Positions 525-541 (RDSISTKPKADKNDTDE) are enriched in basic and acidic residues.

This sequence belongs to the DEAD box helicase family. DDX52/ROK1 subfamily.

The catalysed reaction is ATP + H2O = ADP + phosphate + H(+). This is DEAD-box ATP-dependent RNA helicase 57 (RH57) from Arabidopsis thaliana (Mouse-ear cress).